Here is an 844-residue protein sequence, read N- to C-terminus: Meiosis-specific protein PAIR3 (844 aa).

Disordered stretches follow at residues 41–389 (TSSV…RERR), 418–506 (KLSS…RFSD), 532–604 (DDLF…QISI), and 616–669 (WLSD…EPEK). Polar residues predominate over residues 106 to 120 (QPDDNAIEQTGTFSF). Composition is skewed to basic and acidic residues over residues 122-134 (TRRE…DQLD) and 145-164 (RQVE…RMKL). 2 stretches are compositionally biased toward polar residues: residues 191–208 (QPKS…QKVF) and 218–229 (TPAQFNSQTANK). Composition is skewed to basic and acidic residues over residues 256–270 (RKKE…DKSG) and 324–363 (AKVE…KGEK). Composition is skewed to polar residues over residues 364 to 382 (TNSF…SCSR) and 420 to 440 (SSPQ…SPQQ). Residues 441–456 (KENDNTHIPEASDRTA) show a composition bias toward basic and acidic residues. The span at 459–473 (NSFNSTPSPAANPSP) shows a compositional bias: low complexity. Residues 545–554 (RSRSTSFTSD) are compositionally biased toward polar residues. The span at 616 to 640 (WLSDVDSPDKSSIEHLGRKSHLKEG) shows a compositional bias: basic and acidic residues. Residues 646–661 (QLTSPTHFATSGTQET) show a composition bias toward polar residues. Positions 731–765 (VNAGKSKRKRLESTFEEQQEKLRILHEKFKEEVNQ) form a coiled coil.

In terms of tissue distribution, expressed in pollen mother cells and the ovule tissues during meiosis.

Its subcellular location is the chromosome. The protein resides in the nucleus. Functionally, plays a crucial role in homologous chromosome pairing and synapsis in meiosis. Does not seem required for cytokinesis. Is essential for meiotic bouquet formation, homologous chromosome pairing and normal recombination, and synaptonemal complex (SC) assembly. Required for the proper association of PAIR2 with chromosomes. The chain is Meiosis-specific protein PAIR3 from Oryza sativa subsp. japonica (Rice).